The sequence spans 574 residues: Excitatory amino acid transporter 2 (574 aa).

Topologically, residues Met1 to Asn44 are cytoplasmic. 3 positions are modified to phosphoserine: Ser3, Ser21, and Ser25. Cys38 carries the S-palmitoyl cysteine lipid modification. Residues Leu45–Leu64 form a helical membrane-spanning segment. Over Arg65 to Arg87 the chain is Extracellular. The helical transmembrane segment at Met88–Leu108 threads the bilayer. Residues Asp109–Ala120 are Cytoplasmic-facing. A helical transmembrane segment spans residues Met121–Ile142. Residues His143–Glu235 lie on the Extracellular side of the membrane. 2 N-linked (GlcNAc...) asparagine glycosylation sites follow: Asn206 and Asn216. The chain crosses the membrane as a helical span at residues Phe236–Met259. Residues Gly260–Asp268 lie on the Cytoplasmic side of the membrane. Residues Phe269–Ile296 traverse the membrane as a helical segment. Residues Cys297–Met317 are Extracellular-facing. The chain crosses the membrane as a helical span at residues Val318–Val339. Residues Thr340–Pro344 are Cytoplasmic-facing. Positions Phe345–Leu375 form an intramembrane region, discontinuously helical. Residue Ala362–Ser364 coordinates L-aspartate. Over Glu376–Arg384 the chain is Cytoplasmic. A helical membrane pass occupies residues Val385–Phe411. Na(+) contacts are provided by Gly393, Thr395, and Asn397. Thr401 is an L-aspartate binding site. The Extracellular portion of the chain corresponds to Ile412–Gln424. Positions Ile425–Gly458 form an intramembrane region, discontinuously helical. Residue Ile442 to Gly446 participates in L-aspartate binding. At Leu459–Asp471 the chain is on the extracellular side. The chain crosses the membrane as a helical span at residues Trp472–Val493. Residues Asp475 and Asn482 each contribute to the L-aspartate site. Na(+) is bound by residues Asn482 and Asp486. Over Tyr494–Lys574 the chain is Cytoplasmic. Phosphoserine is present on residues Ser506, Ser521, Ser532, and Ser534. Residue Tyr539 is modified to Phosphotyrosine. A phosphoserine mark is found at Ser544, Ser560, and Ser564.

This sequence belongs to the dicarboxylate/amino acid:cation symporter (DAACS) (TC 2.A.23) family. SLC1A2 subfamily. In terms of assembly, homotrimer. Isoform 3 can oligomerize with isoform 1. Interacts with AJUBA. Glycosylated. Post-translationally, palmitoylation at Cys-38 is not required for correct subcellular localization, but is important for glutamate uptake activity.

The protein resides in the cell membrane. The catalysed reaction is K(+)(in) + L-glutamate(out) + 3 Na(+)(out) + H(+)(out) = K(+)(out) + L-glutamate(in) + 3 Na(+)(in) + H(+)(in). It carries out the reaction K(+)(in) + L-aspartate(out) + 3 Na(+)(out) + H(+)(out) = K(+)(out) + L-aspartate(in) + 3 Na(+)(in) + H(+)(in). The enzyme catalyses D-aspartate(out) + K(+)(in) + 3 Na(+)(out) + H(+)(out) = D-aspartate(in) + K(+)(out) + 3 Na(+)(in) + H(+)(in). Sodium-dependent, high-affinity amino acid transporter that mediates the uptake of L-glutamate and also L-aspartate and D-aspartate. Functions as a symporter that transports one amino acid molecule together with two or three Na(+) ions and one proton, in parallel with the counter-transport of one K(+) ion. Mediates Cl(-) flux that is not coupled to amino acid transport; this avoids the accumulation of negative charges due to aspartate and Na(+) symport. Essential for the rapid removal of released glutamate from the synaptic cleft, and for terminating the postsynaptic action of glutamate. The polypeptide is Excitatory amino acid transporter 2 (Homo sapiens (Human)).